The sequence spans 437 residues: F-box/FBD/LRR-repeat protein At5g22700 (437 aa).

One can recognise an F-box domain in the interval 5–51 (GDRISSLPDELLCQILSNLPTKNAVTTSILSTRWRSIWLSTPVLDID). 7 LRR repeats span residues 86-113 (RDDV…EVDC), 134-160 (SLRL…HLEE), 161-186 (NIYY…TVVR), 187-210 (IVDI…KLVL), 215-240 (GWFI…SLKD), 272-297 (PVTF…TISG), and 322-350 (NARF…VLGL). The 46-residue stretch at 361–406 (RVSSVPPCFLSSLEFVEIRSRLCRKRYVMKVARYFAKNSVMLKKFV) folds into the FBD domain.

This chain is F-box/FBD/LRR-repeat protein At5g22700, found in Arabidopsis thaliana (Mouse-ear cress).